Reading from the N-terminus, the 387-residue chain is Phosphoglycerate kinase (387 aa).

Substrate contacts are provided by residues 21–23, arginine 36, 59–62, arginine 113, and arginine 146; these read DLN and HLGR. Residues lysine 197, glutamate 314, and 340-343 each bind ATP; that span reads GGDT.

This sequence belongs to the phosphoglycerate kinase family. Monomer.

The protein localises to the cytoplasm. It carries out the reaction (2R)-3-phosphoglycerate + ATP = (2R)-3-phospho-glyceroyl phosphate + ADP. It participates in carbohydrate degradation; glycolysis; pyruvate from D-glyceraldehyde 3-phosphate: step 2/5. This Proteus mirabilis (strain HI4320) protein is Phosphoglycerate kinase.